Reading from the N-terminus, the 94-residue chain is Ubiquitin-like protein ATG12B (94 aa).

At Ala-2 the chain carries N-acetylalanine. Residue Gly-94 forms a Glycyl lysine isopeptide (Gly-Lys) (interchain with K-128 in ATG5) linkage.

It belongs to the ATG12 family. Ubiquitous.

The protein resides in the cytoplasm. Ubiquitin-like protein involved in cytoplasm to vacuole transport (Cvt) and autophagy vesicles formation. Conjugation with ATG5 through a ubiquitin-like conjugating system involving also ATG7 as an E1-like activating enzyme and ATG10 as an E2-like conjugating enzyme, is essential for its function. ATG12/ATG5 conjugate has an essential role in plant nutrient recycling. The protein is Ubiquitin-like protein ATG12B (ATG12B) of Arabidopsis thaliana (Mouse-ear cress).